We begin with the raw amino-acid sequence, 667 residues long: Probable export ATP-binding/permease protein MacB (667 aa).

One can recognise an ABC transporter domain in the interval 22–260 (LRLAGVSRRF…PVEEVQPAAE (239 aa)). An ATP-binding site is contributed by 58 to 65 (GASGSGKS). 4 helical membrane passes run 292–312 (LLTM…SAIG), 540–560 (LTLL…IGVM), 601–621 (IGGV…ALFV), and 630–650 (LGSI…FGFV).

Belongs to the ABC transporter superfamily. Macrolide exporter (TC 3.A.1.122) family. In terms of assembly, probably part of a tripartite efflux system, which is composed of an inner membrane transporter, a periplasmic membrane fusion protein, and an outer membrane component.

Its subcellular location is the cell inner membrane. Its function is as follows. Probably part of a tripartite efflux system. The chain is Probable export ATP-binding/permease protein MacB from Pseudomonas entomophila (strain L48).